Consider the following 211-residue polypeptide: MANCAVLDWQGKEAGKASLNLKVAKDSSAVDLMHRAVLRQQAHSRQGTASTLTRAEVRGGGRKPYKQKGTGRARQGSIRTPLRPGGGIIFGPKPRQYNLSMNRKERRLALRTALMARFNDVIAVKDFGSKLKVPKTKEIQDFLARLDISSNSKVLIILSQPSDIIRRSVRNLEKVKLIAAEHLNVFDLLNANSLIIGEDALGKIKEVYGDD.

Residues Gln-41–Thr-53 show a composition bias toward polar residues. Residues Gln-41–Gly-85 form a disordered region. Positions Gly-60 to Gly-71 are enriched in basic residues.

It belongs to the universal ribosomal protein uL4 family. As to quaternary structure, part of the 50S ribosomal subunit.

Its function is as follows. One of the primary rRNA binding proteins, this protein initially binds near the 5'-end of the 23S rRNA. It is important during the early stages of 50S assembly. It makes multiple contacts with different domains of the 23S rRNA in the assembled 50S subunit and ribosome. In terms of biological role, forms part of the polypeptide exit tunnel. This Prochlorococcus marinus (strain SARG / CCMP1375 / SS120) protein is Large ribosomal subunit protein uL4.